The primary structure comprises 192 residues: Probable nicotinate-nucleotide adenylyltransferase (192 aa).

The protein belongs to the NadD family.

It carries out the reaction nicotinate beta-D-ribonucleotide + ATP + H(+) = deamido-NAD(+) + diphosphate. It participates in cofactor biosynthesis; NAD(+) biosynthesis; deamido-NAD(+) from nicotinate D-ribonucleotide: step 1/1. In terms of biological role, catalyzes the reversible adenylation of nicotinate mononucleotide (NaMN) to nicotinic acid adenine dinucleotide (NaAD). The polypeptide is Probable nicotinate-nucleotide adenylyltransferase (Rhizobium etli (strain CIAT 652)).